The primary structure comprises 186 residues: Ribosome-recycling factor (186 aa).

The protein belongs to the RRF family.

It localises to the cytoplasm. Its function is as follows. Responsible for the release of ribosomes from messenger RNA at the termination of protein biosynthesis. May increase the efficiency of translation by recycling ribosomes from one round of translation to another. The polypeptide is Ribosome-recycling factor (Leptothrix cholodnii (strain ATCC 51168 / LMG 8142 / SP-6) (Leptothrix discophora (strain SP-6))).